The primary structure comprises 111 residues: Large ribosomal subunit protein uL24 (111 aa).

The protein belongs to the universal ribosomal protein uL24 family. In terms of assembly, part of the 50S ribosomal subunit.

Functionally, one of two assembly initiator proteins, it binds directly to the 5'-end of the 23S rRNA, where it nucleates assembly of the 50S subunit. In terms of biological role, one of the proteins that surrounds the polypeptide exit tunnel on the outside of the subunit. The sequence is that of Large ribosomal subunit protein uL24 from Bifidobacterium longum (strain DJO10A).